Here is a 123-residue protein sequence, read N- to C-terminus: Large ribosomal subunit protein bL12 (123 aa).

Belongs to the bacterial ribosomal protein bL12 family. Homodimer. Part of the ribosomal stalk of the 50S ribosomal subunit. Forms a multimeric L10(L12)X complex, where L10 forms an elongated spine to which 2 to 4 L12 dimers bind in a sequential fashion. Binds GTP-bound translation factors.

Functionally, forms part of the ribosomal stalk which helps the ribosome interact with GTP-bound translation factors. Is thus essential for accurate translation. The protein is Large ribosomal subunit protein bL12 of Clostridium acetobutylicum (strain ATCC 824 / DSM 792 / JCM 1419 / IAM 19013 / LMG 5710 / NBRC 13948 / NRRL B-527 / VKM B-1787 / 2291 / W).